The primary structure comprises 330 residues: Phytanoyl-CoA hydroxylase-interacting protein (330 aa).

Residues 6–115 enclose the Fibronectin type-III domain; the sequence is TPHSIEINNI…ETVEFCTGDY (110 aa). 2 N-linked (GlcNAc...) asparagine glycosylation sites follow: Asn-14 and Asn-325.

The protein belongs to the PHYHIP family. As to quaternary structure, interacts with PHYH and ADGRB1. Highly expressed in the brain.

In terms of biological role, its interaction with PHYH suggests a role in the development of the central system. The polypeptide is Phytanoyl-CoA hydroxylase-interacting protein (Phyhip) (Mus musculus (Mouse)).